The chain runs to 269 residues: MEIQFQQPNLQQHQKAGTKGGKFKGRNRNSNTNKFVGVRQRPSGRWVAEIKDTTQKIRMWLGTFETAEEAARAYDEAACLLRGSNTRTNFITHVSLDSPLASRIRNLLNNKKGNKKQEGVVDVGVDVDVPAPSASTTSTSSNTSNSDKNDHNSLSSGKVQNTMLFDDAYKPDLSNCKEDFQSCPPQSNFSWGFGPVFDRFPIAQILDMPKTDGMIDAASLELSEFERMKVERQISASLYAINGVHEYMETVQDSNETLWDLPPLCSLFC.

Residues Met-1–Lys-15 are compositionally biased toward polar residues. 2 disordered regions span residues Met-1–Val-36 and Asp-128–Gly-157. A DNA-binding region (AP2/ERF) is located at residues Lys-34–Ile-91. A compositionally biased stretch (low complexity) spans Asp-128–Ser-146.

Belongs to the AP2/ERF transcription factor family. ERF subfamily.

The protein resides in the nucleus. Functionally, transcription factor involved in the symbiotic nodule signaling pathway in response to rhizobial stimulation. Functions as a transcriptional regulator required for root infection by symbiotic rhizobia, infection thread (IT) formation, and nodule development. May coordinate these processes. Functions downstream of the CCAMK-CYCLOPS complex. Probably not involved in arbuscular mycorrhizal (AM) symbiosis. The polypeptide is Ethylene-responsive transcription factor ERN1 (Lotus japonicus (Lotus corniculatus var. japonicus)).